The primary structure comprises 319 residues: tRNA dimethylallyltransferase (319 aa).

An ATP-binding site is contributed by 26–33 (GPTAAGKS). 28–33 (TAAGKS) contacts substrate. The tract at residues 51–54 (DSMQ) is interaction with substrate tRNA.

This sequence belongs to the IPP transferase family. In terms of assembly, monomer. It depends on Mg(2+) as a cofactor.

It catalyses the reaction adenosine(37) in tRNA + dimethylallyl diphosphate = N(6)-dimethylallyladenosine(37) in tRNA + diphosphate. Catalyzes the transfer of a dimethylallyl group onto the adenine at position 37 in tRNAs that read codons beginning with uridine, leading to the formation of N6-(dimethylallyl)adenosine (i(6)A). The chain is tRNA dimethylallyltransferase from Salinispora tropica (strain ATCC BAA-916 / DSM 44818 / JCM 13857 / NBRC 105044 / CNB-440).